The following is a 119-amino-acid chain: Large ribosomal subunit protein uL14 (119 aa).

It belongs to the universal ribosomal protein uL14 family. Part of the 50S ribosomal subunit. Forms a cluster with proteins L3 and L19. In the 70S ribosome, L14 and L19 interact and together make contacts with the 16S rRNA in bridges B5 and B8.

Its function is as follows. Binds to 23S rRNA. Forms part of two intersubunit bridges in the 70S ribosome. The polypeptide is Large ribosomal subunit protein uL14 (Wolbachia pipientis wMel).